The chain runs to 1001 residues: Receptor-type tyrosine-protein phosphatase N2 (1001 aa).

Positions 1–27 are cleaved as a signal peptide; sequence MGPPLPLLLLLLLPPPLPRALPAPASA. The tract at residues 1–407 is involved in localization to secretory granules; interaction with CPE; sequence MGPPLPLLLL…PEGPLLEKSS (407 aa). Over 28–600 the chain is Extracellular; that stretch reads RGRQLPGRLG…HQEEQEDSTK (573 aa). Omega-N-methylarginine is present on R259. Disordered regions lie at residues 271 to 296, 308 to 359, and 394 to 459; these read PFSA…SMDD, QQNS…DAPE, and SPLL…LEDQ. Over residues 312–325 the composition is skewed to basic and acidic residues; the sequence is EVDRLGPLKEEKAD. S339 is subject to Phosphoserine. Residues 340–355 show a composition bias toward basic and acidic residues; it reads QESHGRGAEGQPREQT. Low complexity predominate over residues 394–404; it reads SPLLPEGPLLE. A compositionally biased stretch (basic and acidic residues) spans 405–416; sequence KSSREEIKKSEQ. A compositionally biased stretch (acidic residues) spans 417-428; that stretch reads PEEVLSSEEETA. Phosphoserine is present on residues S422 and S423. Residues 429 to 459 show a composition bias toward basic and acidic residues; the sequence is GVEHVRSRTYSKDLFERKPNSEPQPRRLEDQ. N550 carries an N-linked (GlcNAc...) asparagine glycan. A helical transmembrane segment spans residues 601–621; that stretch reads FILLTFLSIACILGVLLASSL. The Cytoplasmic segment spans residues 622 to 1001; that stretch reads AYCLRHNSHY…VNAILKALPQ (380 aa). Positions 652 to 661 match the Tyrosine-based internalization motif motif; it reads YQELCRQRMA. A disordered region spans residues 663–705; that stretch reads RPQDRSEGPHTSRINSVSSQFSDGPMPSPSARSSTSSWSEEPV. Residues 674-684 show a composition bias toward polar residues; sequence SRINSVSSQFS. Phosphoserine is present on residues S678 and S684. The segment covering 691–705 has biased composition (low complexity); it reads PSARSSTSSWSEEPV. Residue T697 is modified to Phosphothreonine. The Tyrosine-protein phosphatase domain maps to 731 to 991; that stretch reads LEKEWEALCA…EFALTAVAEE (261 aa). Substrate is bound by residues D899 and 931-937; that span reads CSDGAGR. The active-site Phosphocysteine intermediate is the C931. Position 956 is an N6-acetyllysine (K956). Q976 contributes to the substrate binding site. A Leucine-based sorting signal motif is present at residues 990 to 996; sequence EEVNAIL.

This sequence belongs to the protein-tyrosine phosphatase family. As to quaternary structure, self-associates. Interacts (via cytoplasmic domain) with PTPRN (via cytoplasmic domain). Interacts (precursor form) with CPE. Interacts with HAP1 isoform A. Interacts with AP2A1 or AP2A2 and AP1G1; indicative for an association with adaptor protein complex 2 (AP-2) and adaptor protein complex 1 (AP-1). Interacts with AP2M1; indicative for an association with adaptor protein complex 2 (AP-2). Interacts with MYO5A. In terms of processing, subject to proteolytic cleavage at multiple sites during maturation of secretory granules. In the brain at least IA-2beta71, IA-2beta64 and IA-2beta60 have been detected, in the pancreas and a pancreatic beta cell line only IA-2beta60 has been detected. As to expression, detected in brain. Detected in pancreas islets (at protein level). Detected in pancreas and brain.

The protein resides in the cytoplasmic vesicle. Its subcellular location is the secretory vesicle membrane. The protein localises to the secretory vesicle. It is found in the synaptic vesicle membrane. It carries out the reaction O-phospho-L-tyrosyl-[protein] + H2O = L-tyrosyl-[protein] + phosphate. Its function is as follows. Plays a role in vesicle-mediated secretory processes. Required for normal accumulation of secretory vesicles in hippocampus, pituitary and pancreatic islets. Required for the accumulation of normal levels of insulin-containing vesicles and preventing their degradation. Plays a role in insulin secretion in response to glucose stimuli. Required for normal accumulation of the neurotransmitters norepinephrine, dopamine and serotonin in the brain. In females, but not in males, required for normal accumulation and secretion of pituitary hormones, such as luteinizing hormone (LH) and follicle-stimulating hormone (FSH). Required to maintain normal levels of renin expression and renin release. May regulate catalytic active protein-tyrosine phosphatases such as PTPRA through dimerization. Has phosphatidylinositol phosphatase activity; the PIPase activity is involved in its ability to regulate insulin secretion. Can dephosphorylate phosphatidylinositol 4,5-biphosphate (PI(4,5)P2), phosphatidylinositol 5-phosphate and phosphatidylinositol 3-phosphate. Regulates PI(4,5)P2 level in the plasma membrane and localization of cofilin at the plasma membrane and thus is indirectly involved in regulation of actin dynamics related to cell migration and metastasis; upon hydrolysis of PI(4,5)P2 cofilin is released from the plasma membrane and acts in the cytoplasm in severing F-actin filaments. This is Receptor-type tyrosine-protein phosphatase N2 (Ptprn2) from Mus musculus (Mouse).